A 384-amino-acid polypeptide reads, in one-letter code: 8-amino-7-oxononanoate synthase (384 aa).

A substrate-binding site is contributed by arginine 21. 108-109 serves as a coordination point for pyridoxal 5'-phosphate; the sequence is GF. Histidine 133 is a substrate binding site. Residues serine 179, histidine 207, and threonine 233 each contribute to the pyridoxal 5'-phosphate site. Lysine 236 is modified (N6-(pyridoxal phosphate)lysine). Residue threonine 352 coordinates substrate.

Belongs to the class-II pyridoxal-phosphate-dependent aminotransferase family. BioF subfamily. Homodimer. Requires pyridoxal 5'-phosphate as cofactor.

The catalysed reaction is 6-carboxyhexanoyl-[ACP] + L-alanine + H(+) = (8S)-8-amino-7-oxononanoate + holo-[ACP] + CO2. It functions in the pathway cofactor biosynthesis; biotin biosynthesis. Catalyzes the decarboxylative condensation of pimeloyl-[acyl-carrier protein] and L-alanine to produce 8-amino-7-oxononanoate (AON), [acyl-carrier protein], and carbon dioxide. This Enterobacter sp. (strain 638) protein is 8-amino-7-oxononanoate synthase.